Consider the following 371-residue polypeptide: Protein STRICTOSIDINE SYNTHASE-LIKE 6 (371 aa).

The signal sequence occupies residues 1–21; sequence MPVFLSSRFLFFCIIVPLLIS. 2 N-linked (GlcNAc...) asparagine glycosylation sites follow: Asn-101 and Asn-137. Tyr-303 carries the phosphotyrosine modification.

Belongs to the strictosidine synthase family.

The protein resides in the vacuole. This chain is Protein STRICTOSIDINE SYNTHASE-LIKE 6, found in Arabidopsis thaliana (Mouse-ear cress).